The sequence spans 106 residues: Cyclin-dependent protein kinase inhibitor SMR15 (106 aa).

Probable cyclin-dependent protein kinase (CDK) inhibitor that functions as a repressor of mitosis in the endoreduplication cell cycle. This Arabidopsis thaliana (Mouse-ear cress) protein is Cyclin-dependent protein kinase inhibitor SMR15.